A 588-amino-acid chain; its full sequence is D-3-phosphoglycerate dehydrogenase 3, chloroplastic (588 aa).

A chloroplast-targeting transit peptide spans 1-38; that stretch reads MATSLNLSSIFSSSSRLVTTPSSVFPIRQRRRIILVTS. Residues 195–196, Asp215, 274–276, and Asp300 contribute to the NAD(+) site; these read KV and VAR. Arg276 is an active-site residue. Glu305 is an active-site residue. The active-site Proton donor is the His324. 324 to 327 serves as a coordination point for NAD(+); it reads HLGA. Positions 516-588 constitute an ACT domain; that stretch reads VILCRQVDQP…AIEEFVFLKL (73 aa).

Belongs to the D-isomer specific 2-hydroxyacid dehydrogenase family. As to expression, expressed in aerial parts. Not detected in roots and meristematic tissue. Expressed in cotyledons, adult leaves, stigma and anther filaments. Detected in the embryo.

It is found in the plastid. It localises to the chloroplast. The catalysed reaction is (2R)-3-phosphoglycerate + NAD(+) = 3-phosphooxypyruvate + NADH + H(+). It functions in the pathway amino-acid biosynthesis; L-serine biosynthesis; L-serine from 3-phospho-D-glycerate: step 1/3. Partially inhibited by 1 mM serine. Functionally, involved in the plastidial phosphorylated pathway of serine biosynthesis (PPSB). The protein is D-3-phosphoglycerate dehydrogenase 3, chloroplastic (PGDH3) of Arabidopsis thaliana (Mouse-ear cress).